The sequence spans 303 residues: Quinolinate synthase (303 aa).

H23 and S40 together coordinate iminosuccinate. Residue C85 coordinates [4Fe-4S] cluster. Residues 111 to 113 and S128 contribute to the iminosuccinate site; that span reads YVN. C171 lines the [4Fe-4S] cluster pocket. Residues 197 to 199 and T214 each bind iminosuccinate; that span reads HPE. C259 is a [4Fe-4S] cluster binding site.

This sequence belongs to the quinolinate synthase family. Type 2 subfamily. [4Fe-4S] cluster is required as a cofactor.

It is found in the cytoplasm. It carries out the reaction iminosuccinate + dihydroxyacetone phosphate = quinolinate + phosphate + 2 H2O + H(+). Its pathway is cofactor biosynthesis; NAD(+) biosynthesis; quinolinate from iminoaspartate: step 1/1. Its function is as follows. Catalyzes the condensation of iminoaspartate with dihydroxyacetone phosphate to form quinolinate. The chain is Quinolinate synthase from Thermodesulfovibrio yellowstonii (strain ATCC 51303 / DSM 11347 / YP87).